The chain runs to 192 residues: MKIVLASASSRRRQLLSRLIENFQVVVSDFDEDSVVFQGRCESYVMKLAEGKAKDVCRKLTNESSIVIGCDTAVFLRGKVMGKPRDIQEAFHMLKALSGNEHDVYSGIAIMDKVLHKTVKSFVRTTVKFSEIDDRCIKNYLKKGEYKDKAGAYGIQGYGGVFVKEIHGCYYNVVGLPLNKLYNMLSGMGVNL.

Asp71 serves as the catalytic Proton acceptor.

It belongs to the Maf family. YhdE subfamily. Requires a divalent metal cation as cofactor.

The protein localises to the cytoplasm. The enzyme catalyses dTTP + H2O = dTMP + diphosphate + H(+). The catalysed reaction is UTP + H2O = UMP + diphosphate + H(+). In terms of biological role, nucleoside triphosphate pyrophosphatase that hydrolyzes dTTP and UTP. May have a dual role in cell division arrest and in preventing the incorporation of modified nucleotides into cellular nucleic acids. This Clostridium kluyveri (strain NBRC 12016) protein is dTTP/UTP pyrophosphatase.